A 262-amino-acid chain; its full sequence is Phosphatidylserine decarboxylase proenzyme (262 aa).

Residues aspartate 86, histidine 142, and serine 226 each act as charge relay system; for autoendoproteolytic cleavage activity in the active site. Serine 226 serves as the catalytic Schiff-base intermediate with substrate; via pyruvic acid; for decarboxylase activity. Serine 226 carries the post-translational modification Pyruvic acid (Ser); by autocatalysis.

It belongs to the phosphatidylserine decarboxylase family. PSD-B subfamily. Prokaryotic type I sub-subfamily. As to quaternary structure, heterodimer of a large membrane-associated beta subunit and a small pyruvoyl-containing alpha subunit. Requires pyruvate as cofactor. In terms of processing, is synthesized initially as an inactive proenzyme. Formation of the active enzyme involves a self-maturation process in which the active site pyruvoyl group is generated from an internal serine residue via an autocatalytic post-translational modification. Two non-identical subunits are generated from the proenzyme in this reaction, and the pyruvate is formed at the N-terminus of the alpha chain, which is derived from the carboxyl end of the proenzyme. The autoendoproteolytic cleavage occurs by a canonical serine protease mechanism, in which the side chain hydroxyl group of the serine supplies its oxygen atom to form the C-terminus of the beta chain, while the remainder of the serine residue undergoes an oxidative deamination to produce ammonia and the pyruvoyl prosthetic group on the alpha chain. During this reaction, the Ser that is part of the protease active site of the proenzyme becomes the pyruvoyl prosthetic group, which constitutes an essential element of the active site of the mature decarboxylase.

It is found in the cell membrane. It carries out the reaction a 1,2-diacyl-sn-glycero-3-phospho-L-serine + H(+) = a 1,2-diacyl-sn-glycero-3-phosphoethanolamine + CO2. It functions in the pathway phospholipid metabolism; phosphatidylethanolamine biosynthesis; phosphatidylethanolamine from CDP-diacylglycerol: step 2/2. Catalyzes the formation of phosphatidylethanolamine (PtdEtn) from phosphatidylserine (PtdSer). The polypeptide is Phosphatidylserine decarboxylase proenzyme (Bacillus cereus (strain B4264)).